The sequence spans 369 residues: Peptide chain release factor 2 (369 aa).

Position 252 is an N5-methylglutamine (Gln252).

The protein belongs to the prokaryotic/mitochondrial release factor family. In terms of processing, methylated by PrmC. Methylation increases the termination efficiency of RF2.

The protein resides in the cytoplasm. Functionally, peptide chain release factor 2 directs the termination of translation in response to the peptide chain termination codons UGA and UAA. The sequence is that of Peptide chain release factor 2 from Staphylococcus aureus (strain bovine RF122 / ET3-1).